A 418-amino-acid polypeptide reads, in one-letter code: Gamma-glutamyl phosphate reductase (418 aa).

It belongs to the gamma-glutamyl phosphate reductase family.

The protein resides in the cytoplasm. The enzyme catalyses L-glutamate 5-semialdehyde + phosphate + NADP(+) = L-glutamyl 5-phosphate + NADPH + H(+). Its pathway is amino-acid biosynthesis; L-proline biosynthesis; L-glutamate 5-semialdehyde from L-glutamate: step 2/2. Functionally, catalyzes the NADPH-dependent reduction of L-glutamate 5-phosphate into L-glutamate 5-semialdehyde and phosphate. The product spontaneously undergoes cyclization to form 1-pyrroline-5-carboxylate. The protein is Gamma-glutamyl phosphate reductase of Chlorobium limicola (strain DSM 245 / NBRC 103803 / 6330).